The sequence spans 311 residues: tRNA dimethylallyltransferase (311 aa).

16-23 (GPTASGKS) lines the ATP pocket. 18–23 (TASGKS) serves as a coordination point for substrate. The segment at 41–44 (DSMQ) is interaction with substrate tRNA.

This sequence belongs to the IPP transferase family. Monomer. Mg(2+) is required as a cofactor.

It carries out the reaction adenosine(37) in tRNA + dimethylallyl diphosphate = N(6)-dimethylallyladenosine(37) in tRNA + diphosphate. Its function is as follows. Catalyzes the transfer of a dimethylallyl group onto the adenine at position 37 in tRNAs that read codons beginning with uridine, leading to the formation of N6-(dimethylallyl)adenosine (i(6)A). The sequence is that of tRNA dimethylallyltransferase from Geobacter sulfurreducens (strain ATCC 51573 / DSM 12127 / PCA).